The chain runs to 372 residues: MKYDLIIIGSGSVGAAAGYYATRAGLNVLMTDAHMPPHQHGSHHGDTRLIRHAYGEGEKYVPLVLRAQTLWDELSRHNEDDPIFVRSGVINLGPADSAFLANVAHSAEQWQLNVEKLDAQGIMARWPEIRVPDNYIGLFETDSGFLRSELAIKTWIQLAKEAGCAQLFNCPVTAIRHDDDGVTIETVDGEYQAKKAIVCAGTWVKDLLPELPVQPVRKVFAWYQADGRYSVKNKFPAFTGELPNGDQYYGFPAENDALKIGKHNGGQVIHSADERVPFAEVVSDGSEAFPFLRNVLPGIGCCLYGAACTYDNSPDEDFIIDTLPGHDNTLLITGLSGHGFKFASVLGEIAADFAQDKKSDFDLTPFRLSRFQ.

4 to 34 (DLIIIGSGSVGAAAGYYATRAGLNVLMTDAH) provides a ligand contact to FAD. Cys308 bears the S-8alpha-FAD cysteine mark.

Belongs to the MSOX/MTOX family. MTOX subfamily. In terms of assembly, monomer. Requires FAD as cofactor.

The catalysed reaction is N(alpha)-methyl-L-tryptophan + O2 + H2O = L-tryptophan + formaldehyde + H2O2. Catalyzes the oxidative demethylation of N-methyl-L-tryptophan. In Shigella boydii serotype 18 (strain CDC 3083-94 / BS512), this protein is N-methyl-L-tryptophan oxidase.